The sequence spans 565 residues: Efflux pump aunC (565 aa).

The segment covering 1-14 has biased composition (polar residues); that stretch reads MSDTARISGGSFTS. Positions 1 to 57 are disordered; the sequence is MSDTARISGGSFTSPPGRDVELNSFKEASQTRLYPYSSRKEEEGREDEQQRPEREED. Residues 38–54 show a composition bias toward basic and acidic residues; the sequence is SRKEEEGREDEQQRPER. The next 14 helical transmembrane spans lie at 59-79, 103-123, 128-148, 164-184, 194-214, 222-242, 257-277, 293-313, 335-355, 378-398, 399-419, 425-445, 457-477, and 530-550; these read GALT…CIFC, DVGW…LPFG, FFPI…GSFI, VAGL…TQCV, GFIM…GGAF, WCFY…FFTF, AAGL…CLLL, IIAL…LQLW, LYGF…PIWF, VIFA…GPFM, LLSA…HPSS, IGYQ…PVFV, TATA…VSVA, and VHTF…ATVI.

The protein belongs to the major facilitator superfamily. TCR/Tet family.

The protein resides in the cell membrane. In terms of biological role, efflux pump; part of the gene cluster that mediates the biosynthesis of aurasperone B, a dimeric gamma-naphthopyrone. The polypeptide is Efflux pump aunC (Aspergillus niger (strain ATCC MYA-4892 / CBS 513.88 / FGSC A1513)).